Reading from the N-terminus, the 177-residue chain is Cytochrome c oxidase assembly protein CtaG (177 aa).

Over 1–8 (MTQKAKNT) the chain is Cytoplasmic. The chain crosses the membrane as a helical; Signal-anchor for type II membrane protein span at residues 9–29 (IYLLILIILSMLCLVYASVPL). Over 30–177 (YSIFCKVTGY…TFFKYKENTK (148 aa)) the chain is Periplasmic.

This sequence belongs to the COX11/CtaG family.

It is found in the cell inner membrane. In terms of biological role, exerts its effect at some terminal stage of cytochrome c oxidase synthesis, probably by being involved in the insertion of the copper B into subunit I. In Ehrlichia ruminantium (strain Welgevonden), this protein is Cytochrome c oxidase assembly protein CtaG.